Here is a 110-residue protein sequence, read N- to C-terminus: tRNA-binding protein YgjH (110 aa).

A tRNA-binding domain is found at 8-110 (DFARLEMRVG…RMMPAGVRVV (103 aa)).

In terms of assembly, homodimer.

The protein is tRNA-binding protein YgjH (ygjH) of Escherichia coli (strain K12).